Reading from the N-terminus, the 141-residue chain is Protein C19orf12 homolog (141 aa).

Residues 37–57 (AVAFVGGLVGGPPGLAVGGAV) form a helical membrane-spanning segment.

Belongs to the C19orf12 family.

It localises to the mitochondrion. The protein localises to the mitochondrion membrane. The protein resides in the endoplasmic reticulum. Its subcellular location is the cytoplasm. It is found in the cytosol. This chain is Protein C19orf12 homolog, found in Bos taurus (Bovine).